Here is a 589-residue protein sequence, read N- to C-terminus: Probable galacturonosyltransferase 6 (589 aa).

The Cytoplasmic portion of the chain corresponds to 1-6; sequence MKQIRR. Residues 7–27 form a helical; Signal-anchor for type II membrane protein membrane-spanning segment; sequence WQRILILALLSISVFAPLIFV. At 28-589 the chain is on the lumenal side; sequence SNRLKSITPV…TYLQQCNLQA (562 aa). Asn-83 and Asn-126 each carry an N-linked (GlcNAc...) asparagine glycan. The interval 127–151 is disordered; that stretch reads KTDFKPPLSKGEKNTRVQPDRATDV. A compositionally biased stretch (basic and acidic residues) spans 136-151; it reads KGEKNTRVQPDRATDV. Residues Asn-317 and Asn-454 are each glycosylated (N-linked (GlcNAc...) asparagine).

It belongs to the glycosyltransferase 8 family. As to expression, expressed in roots, inflorescences, siliques, leaves and stems.

The protein localises to the golgi apparatus membrane. The protein operates within glycan metabolism; pectin biosynthesis. Its function is as follows. Probably involved in pectin biosynthesis in cell walls. This is Probable galacturonosyltransferase 6 (GAUT6) from Arabidopsis thaliana (Mouse-ear cress).